Consider the following 230-residue polypeptide: Claudin-2 (230 aa).

At 1–7 (MASLGLQ) the chain is on the cytoplasmic side. A helical transmembrane segment spans residues 8-28 (LVGYILGLLGLLGTLVAMLLP). Over 29-81 (SWRTSSYVGTSIVTAVGFSKGLWMECATHSTGITQCDIYSTLLGLPADIQAAQ) the chain is Extracellular. Cysteine 54 and cysteine 64 form a disulfide bridge. A helical membrane pass occupies residues 82 to 102 (AMMVTSSAISSLACIVSVVGM). The Cytoplasmic segment spans residues 103-116 (RCTVFCQDSRAKDR). Residues 117 to 137 (LAVVGGVFFIIGGLLGFIPVA) traverse the membrane as a helical segment. Residues 138–162 (WNLHGILRDFYSPLVPDSMKFEIGE) are Extracellular-facing. A helical transmembrane segment spans residues 163 to 183 (ALYLGIISSLFSLVAGIILCF). At 184-230 (SCPLQGNRSDYYDSYQAQPLATRGSPRPGQPPKAKSEFNSYSLTGYV) the chain is on the cytoplasmic side. The segment at 205–230 (TRGSPRPGQPPKAKSEFNSYSLTGYV) is disordered. Lysine 218 participates in a covalent cross-link: Glycyl lysine isopeptide (Lys-Gly) (interchain with G-Cter in SUMO). Phosphoserine occurs at positions 219 and 223. Residues 220-230 (EFNSYSLTGYV) show a composition bias toward polar residues. The tract at residues 229 to 230 (YV) is interaction with TJP1, TJP2 and TJP3.

Belongs to the claudin family. In terms of assembly, can form homo- and heteropolymers with other claudins to mediate paracellular barrier and channel functions of tight junctions in response to physiological stimuli. Homopolymers interact with CLDN3, but not CLDN1, homopolymers. Directly interacts with TJP1/ZO-1, TJP2/ZO-2 and TJP3/ZO-3. Post-translationally, the disulfide bond is necessary for pore formation, but is not required for correct protein trafficking.

The protein resides in the cell junction. Its subcellular location is the tight junction. The protein localises to the cell membrane. It catalyses the reaction Na(+)(in) = Na(+)(out). It carries out the reaction K(+)(in) = K(+)(out). The catalysed reaction is Rb(+)(in) = Rb(+)(out). The enzyme catalyses Li(+)(in) = Li(+)(out). It catalyses the reaction Cs(+)(in) = Cs(+)(out). It carries out the reaction Ca(2+)(in) = Ca(2+)(out). The catalysed reaction is methylamine(out) = methylamine(in). The enzyme catalyses choline(out) = choline(in). It catalyses the reaction H2O(in) = H2O(out). Functionally, forms paracellular channels: polymerizes in tight junction strands with cation- and water-selective channels through the strands, conveying epithelial permeability in a process known as paracellular tight junction permeability. In intestinal epithelium, allows for sodium and water fluxes from the peritoneal side to the lumen of the intestine to regulate nutrient absorption and clear enteric pathogens as part of mucosal immune response. In kidney, allows passive sodium and calcium reabsorption across proximal tubules from the lumen back to the bloodstream. In the hepatobiliary tract, allows paracellular water and cation fluxes in the hepatic perivenous areas and biliary epithelium to generate bile flow and maintain osmotic gradients. In Canis lupus familiaris (Dog), this protein is Claudin-2 (CLDN2).